An 84-amino-acid chain; its full sequence is Putative membrane protein insertion efficiency factor (84 aa).

The tract at residues 63–84 is disordered; sequence GEDPVPNHFTLRRNKKEKPSKS.

The protein belongs to the UPF0161 family.

Its subcellular location is the cell membrane. In terms of biological role, could be involved in insertion of integral membrane proteins into the membrane. In Streptococcus mutans serotype c (strain ATCC 700610 / UA159), this protein is Putative membrane protein insertion efficiency factor.